A 127-amino-acid polypeptide reads, in one-letter code: Glycine cleavage system H protein (127 aa).

Residues 22 to 104 form the Lipoyl-binding domain; that stretch reads AVVIGITHFA…YEGAWMVKVE (83 aa). Lys63 carries the N6-lipoyllysine modification.

Belongs to the GcvH family. In terms of assembly, the glycine cleavage system is composed of four proteins: P, T, L and H. (R)-lipoate serves as cofactor.

Its function is as follows. The glycine cleavage system catalyzes the degradation of glycine. The H protein shuttles the methylamine group of glycine from the P protein to the T protein. Is also involved in protein lipoylation via its role as an octanoyl/lipoyl carrier protein intermediate. This is Glycine cleavage system H protein from Bacillus mycoides (strain KBAB4) (Bacillus weihenstephanensis).